The following is a 381-amino-acid chain: Cytochrome b (381 aa).

Helical transmembrane passes span 34-54 (FGSLLGLCLVIQIVTGLFLAM), 78-99 (WLIRNIHANGASLFFVCIYFHI), 114-134 (WNIGVILLFLLMATAFVGYVL), and 179-199 (FFAFHFLLPFLITALMIIHIL). Histidine 84 and histidine 98 together coordinate heme b. The heme b site is built by histidine 183 and histidine 197. Histidine 202 contributes to the a ubiquinone binding site. The next 4 membrane-spanning stretches (helical) occupy residues 227–247 (YKDALGFLSLLILLGILALFL), 289–309 (LGGVLALLFSILILMLVPFLH), 321–341 (LTQVFFWILVANMLVLTWIGG), and 348–368 (FILIGQIASISYFSLFLIAIP).

The protein belongs to the cytochrome b family. As to quaternary structure, the cytochrome bc1 complex contains 3 respiratory subunits (MT-CYB, CYC1 and UQCRFS1), 2 core proteins (UQCRC1 and UQCRC2) and probably 6 low-molecular weight proteins. It depends on heme b as a cofactor.

It localises to the mitochondrion inner membrane. Its function is as follows. Component of the ubiquinol-cytochrome c reductase complex (complex III or cytochrome b-c1 complex) that is part of the mitochondrial respiratory chain. The b-c1 complex mediates electron transfer from ubiquinol to cytochrome c. Contributes to the generation of a proton gradient across the mitochondrial membrane that is then used for ATP synthesis. This chain is Cytochrome b (mt-cyb), found in Carcharodon carcharias (Great white shark).